A 423-amino-acid polypeptide reads, in one-letter code: Histidine--tRNA ligase (423 aa).

Belongs to the class-II aminoacyl-tRNA synthetase family.

The protein localises to the cytoplasm. It carries out the reaction tRNA(His) + L-histidine + ATP = L-histidyl-tRNA(His) + AMP + diphosphate + H(+). The chain is Histidine--tRNA ligase from Picrophilus torridus (strain ATCC 700027 / DSM 9790 / JCM 10055 / NBRC 100828 / KAW 2/3).